The primary structure comprises 879 residues: Alanine--tRNA ligase (879 aa).

Residues histidine 570, histidine 574, cysteine 672, and histidine 676 each contribute to the Zn(2+) site.

It belongs to the class-II aminoacyl-tRNA synthetase family. Zn(2+) is required as a cofactor.

The protein localises to the cytoplasm. It carries out the reaction tRNA(Ala) + L-alanine + ATP = L-alanyl-tRNA(Ala) + AMP + diphosphate. In terms of biological role, catalyzes the attachment of alanine to tRNA(Ala) in a two-step reaction: alanine is first activated by ATP to form Ala-AMP and then transferred to the acceptor end of tRNA(Ala). Also edits incorrectly charged Ser-tRNA(Ala) and Gly-tRNA(Ala) via its editing domain. This is Alanine--tRNA ligase from Nitratidesulfovibrio vulgaris (strain ATCC 29579 / DSM 644 / CCUG 34227 / NCIMB 8303 / VKM B-1760 / Hildenborough) (Desulfovibrio vulgaris).